Here is a 225-residue protein sequence, read N- to C-terminus: MELRLSSGNILDEKVHKVGIIALGSFLENHGAVLPIDTDIKIASYIALKAAILTGAKFLGVVIPSTEYEYVKHGIHNKPEDIYYYLRFLINEGKKIGVEKFLIVNCHGGNILIEKFLKDLEYEFGVKVEMINIAFTHAATEEVSVGYVIGIAKADEKSLKEHNNFEKYPEVGMVGLKEARENNKAIDEEAKAVEKFGVRLDKNLGEKILNDAIEKVVDKVKEMIR.

Residues Glu28, His30, Asp39, and His107 each coordinate Fe cation.

The protein belongs to the creatininase superfamily. FAPy deformylase family. Homodimer. Fe(2+) is required as a cofactor. Zn(2+) serves as cofactor.

It carries out the reaction 2-amino-5-formylamino-6-(5-phospho-D-ribosylamino)pyrimidin-4(3H)-one + H2O = 2,5-diamino-6-(1-D-ribosylamino)pyrimidin-4(3H)-one 5'-phosphate + formate + H(+). It participates in cofactor biosynthesis; coenzyme F420 biosynthesis. Its pathway is cofactor biosynthesis; riboflavin biosynthesis. Catalyzes the hydrolysis of the formamide of 2-amino-5-formylamino-6-ribosylamino-4(3H)-pyrimidinone 5'-monophosphate (FAPy) to form 2,5-diamino-6-ribosylamino-4(3H)-pyrimidinone 5'-phosphate (APy). The chain is 2-amino-5-formylamino-6-ribosylaminopyrimidin-4(3H)-one 5'-monophosphate deformylase from Methanocaldococcus fervens (strain DSM 4213 / JCM 15782 / AG86) (Methanococcus fervens).